A 112-amino-acid chain; its full sequence is MATISPSPDLFTLVNVFGVAPEKQRELRDHLVQVTEDLIRHMPGFVSATFHLSRDGEQVVNYAQWRSEADFRAMHADPRLQPHFDYCRSVSRPKPIFCEVTHSFGATSPEGA.

The region spanning 11-100 (FTLVNVFGVA…SRPKPIFCEV (90 aa)) is the ABM domain.

Homotrimer.

It catalyses the reaction tetracenomycin F1 + O2 = tetracenomycin D3 + H2O + H(+). The protein operates within antibiotic biosynthesis; tetracenomycin C biosynthesis. Inhibited by p-chloromercuribenzoic acid, N-ethylmaleimide and diethyl pyrocarbonate. Its function is as follows. Oxygenase required for conversion of tetracenomycin F1 to tetracenomycin D3. The polypeptide is Tetracenomycin-F1 monooxygenase (tcmH) (Streptomyces glaucescens).